The sequence spans 318 residues: Probable 3-hydroxyisobutyrate dehydrogenase-like 3, mitochondrial (318 aa).

Residues 35–64 and Ser-129 contribute to the NAD(+) site; that span reads TRIG…TVYA. Residue Lys-203 is part of the active site. Lys-271 is a binding site for NAD(+).

It belongs to the HIBADH-related family. 3-hydroxyisobutyrate dehydrogenase subfamily.

It is found in the mitochondrion. It carries out the reaction 3-hydroxy-2-methylpropanoate + NAD(+) = 2-methyl-3-oxopropanoate + NADH + H(+). It functions in the pathway amino-acid degradation; L-valine degradation. The polypeptide is Probable 3-hydroxyisobutyrate dehydrogenase-like 3, mitochondrial (Arabidopsis thaliana (Mouse-ear cress)).